Here is a 149-residue protein sequence, read N- to C-terminus: Large ribosomal subunit protein uL13 (149 aa).

It belongs to the universal ribosomal protein uL13 family. As to quaternary structure, part of the 50S ribosomal subunit.

Functionally, this protein is one of the early assembly proteins of the 50S ribosomal subunit, although it is not seen to bind rRNA by itself. It is important during the early stages of 50S assembly. This chain is Large ribosomal subunit protein uL13, found in Chlorobium phaeobacteroides (strain DSM 266 / SMG 266 / 2430).